The chain runs to 248 residues: 1-(5-phosphoribosyl)-5-[(5-phosphoribosylamino)methylideneamino] imidazole-4-carboxamide isomerase (248 aa).

Asp-11 (proton acceptor) is an active-site residue. Asp-132 functions as the Proton donor in the catalytic mechanism.

This sequence belongs to the HisA/HisF family.

The protein localises to the cytoplasm. It catalyses the reaction 1-(5-phospho-beta-D-ribosyl)-5-[(5-phospho-beta-D-ribosylamino)methylideneamino]imidazole-4-carboxamide = 5-[(5-phospho-1-deoxy-D-ribulos-1-ylimino)methylamino]-1-(5-phospho-beta-D-ribosyl)imidazole-4-carboxamide. It functions in the pathway amino-acid biosynthesis; L-histidine biosynthesis; L-histidine from 5-phospho-alpha-D-ribose 1-diphosphate: step 4/9. This chain is 1-(5-phosphoribosyl)-5-[(5-phosphoribosylamino)methylideneamino] imidazole-4-carboxamide isomerase, found in Afipia carboxidovorans (strain ATCC 49405 / DSM 1227 / KCTC 32145 / OM5) (Oligotropha carboxidovorans).